Here is a 394-residue protein sequence, read N- to C-terminus: Cytochrome b561 and DOMON domain-containing protein At4g12980 (394 aa).

The first 24 residues, 1-24 (MDSSYLRISLSFLFWALLLSPAVS), serve as a signal peptide directing secretion. The DOMON domain occupies 49 to 169 (LKAILHYSYD…GKVNQVWQVG (121 aa)). In terms of domain architecture, Cytochrome b561 spans 184 to 381 (GPNLNSVGSL…LEVVTWVIVL (198 aa)). 2 helical membrane-spanning segments follow: residues 220–240 (IHGI…AMIA) and 252–272 (AWFY…VAGW). Histidine 221, histidine 257, and histidine 290 together coordinate heme b. A helical membrane pass occupies residues 292 to 312 (NIGICLFSIATLQMFAMLLRP). Position 326 (histidine 326) interacts with heme b. The next 2 membrane-spanning stretches (helical) occupy residues 328-348 (GVGY…LSIL) and 361-381 (VIGT…VIVL).

Heme b serves as cofactor.

It is found in the membrane. Functionally, may act as a catecholamine-responsive trans-membrane electron transporter. The sequence is that of Cytochrome b561 and DOMON domain-containing protein At4g12980 from Arabidopsis thaliana (Mouse-ear cress).